The primary structure comprises 104 residues: A-type ATP synthase subunit F (104 aa).

Belongs to the V-ATPase F subunit family. As to quaternary structure, has multiple subunits with at least A(3), B(3), C, D, E, F, H, I and proteolipid K(x).

The protein resides in the cell membrane. In terms of biological role, component of the A-type ATP synthase that produces ATP from ADP in the presence of a proton gradient across the membrane. The polypeptide is A-type ATP synthase subunit F (Thermoplasma acidophilum (strain ATCC 25905 / DSM 1728 / JCM 9062 / NBRC 15155 / AMRC-C165)).